A 379-amino-acid chain; its full sequence is Spermidine/putrescine import ATP-binding protein PotA (379 aa).

The ABC transporter domain occupies 10-240 (VTIDQVSKAY…PATDFVAKFI (231 aa)). 42 to 49 (GPSGCGKT) contributes to the ATP binding site.

The protein belongs to the ABC transporter superfamily. Spermidine/putrescine importer (TC 3.A.1.11.1) family. As to quaternary structure, the complex is composed of two ATP-binding proteins (PotA), two transmembrane proteins (PotB and PotC) and a solute-binding protein (PotD).

The protein localises to the cell inner membrane. It catalyses the reaction ATP + H2O + polyamine-[polyamine-binding protein]Side 1 = ADP + phosphate + polyamineSide 2 + [polyamine-binding protein]Side 1.. Its function is as follows. Part of the ABC transporter complex PotABCD involved in spermidine/putrescine import. Responsible for energy coupling to the transport system. The sequence is that of Spermidine/putrescine import ATP-binding protein PotA from Treponema pallidum (strain Nichols).